A 259-amino-acid polypeptide reads, in one-letter code: Putative protein-tyrosine sulfotransferase (259 aa).

C13 and C68 are joined by a disulfide. The active-site Proton donor/acceptor is the E16. N36 carries N-linked (GlcNAc...) asparagine glycosylation. R95, S103, and R107 together coordinate 3'-phosphoadenylyl sulfate. A glycan (N-linked (GlcNAc...) asparagine) is linked at N115. C137 and C144 form a disulfide bridge. 3'-phosphoadenylyl sulfate is bound by residues Y149 and 194-203 (SASQVKNSIN).

It belongs to the protein sulfotransferase family.

The enzyme catalyses L-tyrosyl-[protein] + 3'-phosphoadenylyl sulfate = O-sulfo-L-tyrosine-[protein] + adenosine 3',5'-bisphosphate + H(+). In terms of biological role, catalyzes the O-sulfation of tyrosine residues within acidic motifs of polypeptides, using 3'-phosphoadenylyl sulfate (PAPS) as cosubstrate. The chain is Putative protein-tyrosine sulfotransferase (tpst-2) from Caenorhabditis elegans.